Consider the following 896-residue polypeptide: Protein translocase subunit SecA (896 aa).

Residues glutamine 87, 105–109 (GEGKT), and aspartate 512 contribute to the ATP site. The tract at residues 867–889 (QEPARSNRVAGRNDPCPCGSGKK) is disordered. Positions 882, 884, 893, and 894 each coordinate Zn(2+).

This sequence belongs to the SecA family. In terms of assembly, monomer and homodimer. Part of the essential Sec protein translocation apparatus which comprises SecA, SecYEG and auxiliary proteins SecDF-YajC and YidC. Zn(2+) serves as cofactor.

The protein resides in the cell inner membrane. Its subcellular location is the cytoplasm. The enzyme catalyses ATP + H2O + cellular proteinSide 1 = ADP + phosphate + cellular proteinSide 2.. Functionally, part of the Sec protein translocase complex. Interacts with the SecYEG preprotein conducting channel. Has a central role in coupling the hydrolysis of ATP to the transfer of proteins into and across the cell membrane, serving as an ATP-driven molecular motor driving the stepwise translocation of polypeptide chains across the membrane. This is Protein translocase subunit SecA from Pelobacter propionicus (strain DSM 2379 / NBRC 103807 / OttBd1).